The following is a 349-amino-acid chain: N-formyl peptide receptor 3 (349 aa).

The Extracellular portion of the chain corresponds to 1-27; the sequence is METNFSIPLNETEEVLPEPAGHTVLWI. 2 N-linked (GlcNAc...) asparagine glycosylation sites follow: asparagine 4 and asparagine 10. Residues 28-50 traverse the membrane as a helical segment; sequence FSLLVHGVTFVFGVLGNGLVIWV. Over 51–61 the chain is Cytoplasmic; sequence AGFRMTRTVNT. Residues 62–83 form a helical membrane-spanning segment; that stretch reads ICYLNLALADFSFSAILPFRMV. The Extracellular portion of the chain corresponds to 84–100; sequence SVAMREKWPFGSFLCKL. A disulfide bridge connects residues cysteine 98 and cysteine 176. The helical transmembrane segment at 101–121 threads the bilayer; sequence VHVMIDINLFVSVYLITIIAL. The Cytoplasmic segment spans residues 122–140; sequence DRCICVLHPAWAQNHRTMS. The helical transmembrane segment at 141 to 162 threads the bilayer; it reads LAKRVMTGLWILTIVLTLPNFI. At 163 to 205 the chain is on the extracellular side; sequence FWTTIRTTNGDTYCIFNFAFWGDTAVERLNVFITMAKVFLILH. A helical transmembrane segment spans residues 206–226; sequence FIIGFSMPMSIITVCYGIIAA. Residues 227–242 lie on the Cytoplasmic side of the membrane; the sequence is KIHRNHMIKSSRPLRV. A helical transmembrane segment spans residues 243 to 266; sequence FAAVVASFFICWFPYELIGILMAV. The Extracellular segment spans residues 267–286; that stretch reads WLKEMLLNGKYKIILVLINP. A helical membrane pass occupies residues 287 to 306; it reads TSSLAFFNSCLNPILYVFMG. Topologically, residues 307–349 are cytoplasmic; the sequence is RNFQERLIRSLPTSLERALTEVPDSAQTSNTHTTSASPPEETE. The tract at residues 327–349 is disordered; the sequence is EVPDSAQTSNTHTTSASPPEETE. The segment covering 331-343 has biased composition (polar residues); it reads SAQTSNTHTTSAS.

The protein belongs to the G-protein coupled receptor 1 family.

Its subcellular location is the cell membrane. Its function is as follows. Low affinity receptor for N-formyl-methionyl peptides, which are powerful neutrophils chemotactic factors. Binding of FMLP to the receptor causes activation of neutrophils. This response is mediated via a G-protein that activates a phosphatidylinositol-calcium second messenger system. The polypeptide is N-formyl peptide receptor 3 (FPR3) (Pan troglodytes (Chimpanzee)).